Consider the following 1435-residue polypeptide: Protein clueless (1435 aa).

A disordered region spans residues 1-97 (MALEMDSKNS…KPEGDGDADA (97 aa)). Low complexity predominate over residues 18–35 (AAAATTKTNKAKENNNLA). The span at 38-50 (KKNQSQNLVNGNG) shows a compositional bias: polar residues. Residues 58–67 (TKKKGKKNRN) show a composition bias toward basic residues. Serine 266 carries the phosphoserine modification. Positions 420–662 (RAEDAFSSKL…RTFPPDVNFL (243 aa)) constitute a Clu domain. Composition is skewed to basic and acidic residues over residues 719 to 731 (KKPEETQSEEKKQ) and 752 to 762 (PNEKEKDTPVE). Disordered stretches follow at residues 719 to 762 (KKPE…TPVE) and 952 to 998 (VSND…SSSS). The span at 959 to 975 (KKRGGNGGKHNKHKSSK) shows a compositional bias: basic residues. A compositionally biased stretch (low complexity) spans 988-998 (NGGSTTSSSSS). TPR repeat units lie at residues 1096–1129 (AYNFYTTGQAKIQQGLFKEGYELISEALNLLNNV), 1222–1255 (ALIDSNISLILHALGEYELSLRFIEHALKLNLKY), and 1257–1290 (GNKAMHVAVSYHLMARTQSCMGDFRSALNNEKET). The disordered stretch occupies residues 1407–1435 (EVLAPQDNNKEQAATAQQLTNGDKVAVSS). Polar residues predominate over residues 1417-1435 (EQAATAQQLTNGDKVAVSS).

Belongs to the CLU family.

The protein localises to the cytoplasm. MRNA-binding protein involved in proper cytoplasmic distribution of mitochondria. The sequence is that of Protein clueless from Drosophila persimilis (Fruit fly).